We begin with the raw amino-acid sequence, 450 residues long: Tubulin beta-6 chain (450 aa).

Positions 11, 71, 140, 144, 145, 146, 206, and 228 each coordinate GTP. Glu-71 contributes to the Mg(2+) binding site. Positions 429–450 (DATVEDEEEYEGEEGLDENYET) are disordered. Over residues 431 to 450 (TVEDEEEYEGEEGLDENYET) the composition is skewed to acidic residues.

This sequence belongs to the tubulin family. In terms of assembly, dimer of alpha and beta chains. A typical microtubule is a hollow water-filled tube with an outer diameter of 25 nm and an inner diameter of 15 nM. Alpha-beta heterodimers associate head-to-tail to form protofilaments running lengthwise along the microtubule wall with the beta-tubulin subunit facing the microtubule plus end conferring a structural polarity. Microtubules usually have 13 protofilaments but different protofilament numbers can be found in some organisms and specialized cells. Requires Mg(2+) as cofactor.

Its subcellular location is the cytoplasm. It is found in the cytoskeleton. Tubulin is the major constituent of microtubules, a cylinder consisting of laterally associated linear protofilaments composed of alpha- and beta-tubulin heterodimers. Microtubules grow by the addition of GTP-tubulin dimers to the microtubule end, where a stabilizing cap forms. Below the cap, tubulin dimers are in GDP-bound state, owing to GTPase activity of alpha-tubulin. This is Tubulin beta-6 chain from Gossypium hirsutum (Upland cotton).